The following is a 245-amino-acid chain: MGDTIIVIPARYGSTRLKAKVLEQLDGKSIVEHVWRAAKAAGEGKVLIATESPVIVEHCAKFGAQAVLTSEACQSGTDRIYEAVKNGSEDYVLNLQGDEPFVKPQTIKGVIKLLKKDSKIDIATACYPTFNDDIYKNPNAVKAVLTKDMRALYFSRSAIPYKRELTEETKKAPYYIHCGIYGYKKTALERFVNLPPSNLEKLEKLEQLRALEDGMVIKSILIEAAGPAIDTAEDLNEARKYIRNN.

The protein belongs to the KdsB family.

It is found in the cytoplasm. The enzyme catalyses 3-deoxy-alpha-D-manno-oct-2-ulosonate + CTP = CMP-3-deoxy-beta-D-manno-octulosonate + diphosphate. Its pathway is nucleotide-sugar biosynthesis; CMP-3-deoxy-D-manno-octulosonate biosynthesis; CMP-3-deoxy-D-manno-octulosonate from 3-deoxy-D-manno-octulosonate and CTP: step 1/1. The protein operates within bacterial outer membrane biogenesis; lipopolysaccharide biosynthesis. In terms of biological role, activates KDO (a required 8-carbon sugar) for incorporation into bacterial lipopolysaccharide in Gram-negative bacteria. In Elusimicrobium minutum (strain Pei191), this protein is 3-deoxy-manno-octulosonate cytidylyltransferase.